Reading from the N-terminus, the 1070-residue chain is DNA-directed RNA polymerase subunit beta (1070 aa).

Belongs to the RNA polymerase beta chain family. In plastids the minimal PEP RNA polymerase catalytic core is composed of four subunits: alpha, beta, beta', and beta''. When a (nuclear-encoded) sigma factor is associated with the core the holoenzyme is formed, which can initiate transcription.

It is found in the plastid. It localises to the chloroplast. The enzyme catalyses RNA(n) + a ribonucleoside 5'-triphosphate = RNA(n+1) + diphosphate. In terms of biological role, DNA-dependent RNA polymerase catalyzes the transcription of DNA into RNA using the four ribonucleoside triphosphates as substrates. This chain is DNA-directed RNA polymerase subunit beta, found in Piper cenocladum (Ant piper).